The primary structure comprises 779 residues: 3-isopropylmalate dehydratase (779 aa).

3 residues coordinate [4Fe-4S] cluster: C360, C421, and C424. The interval Q484–P518 is disordered. S488 carries the phosphoserine modification. T494 carries the post-translational modification Phosphothreonine. S495 carries the post-translational modification Phosphoserine. The segment covering L501–E510 has biased composition (basic and acidic residues).

It belongs to the aconitase/IPM isomerase family. As to quaternary structure, monomer. [4Fe-4S] cluster serves as cofactor.

It carries out the reaction (2R,3S)-3-isopropylmalate = (2S)-2-isopropylmalate. It participates in amino-acid biosynthesis; L-leucine biosynthesis; L-leucine from 3-methyl-2-oxobutanoate: step 2/4. Functionally, catalyzes the isomerization between 2-isopropylmalate and 3-isopropylmalate, via the formation of 2-isopropylmaleate. This Saccharomyces cerevisiae (strain ATCC 204508 / S288c) (Baker's yeast) protein is 3-isopropylmalate dehydratase (LEU1).